The sequence spans 207 residues: ATP-dependent Clp protease proteolytic subunit 2 (207 aa).

The Nucleophile role is filled by serine 102. Histidine 127 is an active-site residue.

Belongs to the peptidase S14 family. As to quaternary structure, fourteen ClpP subunits assemble into 2 heptameric rings which stack back to back to give a disk-like structure with a central cavity, resembling the structure of eukaryotic proteasomes.

It localises to the cytoplasm. It catalyses the reaction Hydrolysis of proteins to small peptides in the presence of ATP and magnesium. alpha-casein is the usual test substrate. In the absence of ATP, only oligopeptides shorter than five residues are hydrolyzed (such as succinyl-Leu-Tyr-|-NHMec, and Leu-Tyr-Leu-|-Tyr-Trp, in which cleavage of the -Tyr-|-Leu- and -Tyr-|-Trp bonds also occurs).. Its function is as follows. Cleaves peptides in various proteins in a process that requires ATP hydrolysis. Has a chymotrypsin-like activity. Plays a major role in the degradation of misfolded proteins. The sequence is that of ATP-dependent Clp protease proteolytic subunit 2 from Bifidobacterium longum (strain NCC 2705).